The primary structure comprises 160 residues: Anaerobic nitrite reductase HBII (160 aa).

A Globin domain is found at G8–K157. The Homodimerization motif lies at E41–S45. S51, K65, H69, K99, S103, and H104 together coordinate heme b. Residues D111–E123 carry the Homodimerization motif.

The protein belongs to the plant globin family. Homodimer. Requires heme b as cofactor.

The protein resides in the cytoplasm. Its subcellular location is the nucleus. It catalyses the reaction Fe(III)-heme b-[protein] + nitric oxide + H2O = Fe(II)-heme b-[protein] + nitrite + 2 H(+). Phytoglobin that reduces nitrite to nitric oxide (NO) under anoxic conditions (e.g. during flooding or in waterlogged soil) and upon root nodulation. Required for general plant development and during nodulation, especially for the onset of symbiosis. Monitors nitric oxide (NO) levels during early phase of the nitrogen-fixing symbiosis and buffers oxygen in functioning nodules. May not function as an oxygen storage or transport protein. Has an unusually high affinity for O(2) through a hexacoordinate heme iron because of a very low dissociation constant. The chain is Anaerobic nitrite reductase HBII from Casuarina glauca (Swamp oak).